Reading from the N-terminus, the 464-residue chain is ATP synthase subunit beta 1 (464 aa).

153-160 (GGAGVGKT) provides a ligand contact to ATP.

This sequence belongs to the ATPase alpha/beta chains family. F-type ATPases have 2 components, CF(1) - the catalytic core - and CF(0) - the membrane proton channel. CF(1) has five subunits: alpha(3), beta(3), gamma(1), delta(1), epsilon(1). CF(0) has three main subunits: a(1), b(2) and c(9-12). The alpha and beta chains form an alternating ring which encloses part of the gamma chain. CF(1) is attached to CF(0) by a central stalk formed by the gamma and epsilon chains, while a peripheral stalk is formed by the delta and b chains.

The protein resides in the cell inner membrane. The enzyme catalyses ATP + H2O + 4 H(+)(in) = ADP + phosphate + 5 H(+)(out). In terms of biological role, produces ATP from ADP in the presence of a proton gradient across the membrane. The catalytic sites are hosted primarily by the beta subunits. This chain is ATP synthase subunit beta 1, found in Burkholderia mallei (strain SAVP1).